The chain runs to 816 residues: Larval serum protein 1 alpha chain (816 aa).

Residues 1–16 (MKFAIAFLACVAVVTA) form the signal peptide.

The protein belongs to the hemocyanin family. In terms of assembly, heterohexamer, composed of three subunits, alpha, beta and gamma. In terms of tissue distribution, larval hemolymph.

It localises to the secreted. The protein localises to the extracellular space. Its function is as follows. Larval storage protein (LSP) which may serve as a store of amino acids for synthesis of adult proteins. The chain is Larval serum protein 1 alpha chain (Lsp1alpha) from Drosophila melanogaster (Fruit fly).